Here is a 107-residue protein sequence, read N- to C-terminus: Multidrug resistance protein mmr (107 aa).

4 helical membrane passes run 2-19 (TYLF…ATSL), 29-51 (LWPT…VSIS), 58-80 (VAYA…LFLG), and 84-106 (SVTK…LTGA).

The protein belongs to the drug/metabolite transporter (DMT) superfamily. Small multidrug resistance (SMR) (TC 2.A.7.1) family. Mmr subfamily.

It is found in the cell membrane. In terms of biological role, multidrug efflux pump. Confers resistance to tetraphenylphosphonium (TPP), erythromycin, ethidium bromide, acriflavine, safranin O and pyronin Y. The sequence is that of Multidrug resistance protein mmr (mmr) from Mycolicibacterium paratuberculosis (strain ATCC BAA-968 / K-10) (Mycobacterium paratuberculosis).